Reading from the N-terminus, the 513-residue chain is MQLNSTEIAELIKKRIAQFNVVTEARNEGTIVSVSDGIIRIHGLADVMQGEMIELPGNSYGLALNLERDSVGAIVMGPYTDLAEGQKVTGTGRILEVPVGRGLLGRVVNTLGQPIDGKGPIENDGFAPVEVIAPGVIERQSVSQPVQTGYKAVDAMIPIGRGQRELIIGDRQTGKTALAIDAIINQKDSGIKCVYVAIGQKASTIANVVRKLEEHGALANTIVVVASASESASLQYLAPYSGCTMGEYFRDRGEDALIIYDDLSKHAVAYRQISLLLRRPPGREAYPGDVFYLHSRLLERASRVNTDYVEAFTKGAVKGQTGSLTALPIIETQAGDVSAFVPTNVISITDGQIFLTTQLFNAGIRPAVDPGISVSRVGGAAQTKIIKKLSGGIRTALAQYRELAAFAQFSSDLDDATRKQLNHGQKVTELMKQKQYAPMSVAQQALVLFAAERGYLEDVELNKIGDFEAALLSYANNEHADLMAEINAKADYNDDIVARLSALIDSFKATHTW.

Residue 169-176 (GDRQTGKT) coordinates ATP.

This sequence belongs to the ATPase alpha/beta chains family. F-type ATPases have 2 components, CF(1) - the catalytic core - and CF(0) - the membrane proton channel. CF(1) has five subunits: alpha(3), beta(3), gamma(1), delta(1), epsilon(1). CF(0) has three main subunits: a(1), b(2) and c(9-12). The alpha and beta chains form an alternating ring which encloses part of the gamma chain. CF(1) is attached to CF(0) by a central stalk formed by the gamma and epsilon chains, while a peripheral stalk is formed by the delta and b chains.

It is found in the cell inner membrane. It carries out the reaction ATP + H2O + 4 H(+)(in) = ADP + phosphate + 5 H(+)(out). Produces ATP from ADP in the presence of a proton gradient across the membrane. The alpha chain is a regulatory subunit. The sequence is that of ATP synthase subunit alpha from Tolumonas auensis (strain DSM 9187 / NBRC 110442 / TA 4).